The sequence spans 110 residues: MSEFKRIPPEQALELRKKEGAVVVDIRDPQAFAAGHITGARHLDNHSVADFIRNADLDAPTLVVCYHGNSSQSAAAYLVGQGFSDVYSVDGGFELWRATYPAETAQGNAE.

The 89-residue stretch at 17–105 (KKEGAVVVDI…WRATYPAETA (89 aa)) folds into the Rhodanese domain. Cys65 (cysteine persulfide intermediate) is an active-site residue.

The protein belongs to the GlpE family.

It is found in the cytoplasm. The enzyme catalyses thiosulfate + hydrogen cyanide = thiocyanate + sulfite + 2 H(+). It carries out the reaction thiosulfate + [thioredoxin]-dithiol = [thioredoxin]-disulfide + hydrogen sulfide + sulfite + 2 H(+). Its function is as follows. Transferase that catalyzes the transfer of sulfur from thiosulfate to thiophilic acceptors such as cyanide or dithiols. May function in a CysM-independent thiosulfate assimilation pathway by catalyzing the conversion of thiosulfate to sulfite, which can then be used for L-cysteine biosynthesis. The protein is Thiosulfate sulfurtransferase GlpE of Pseudomonas putida (strain ATCC 700007 / DSM 6899 / JCM 31910 / BCRC 17059 / LMG 24140 / F1).